Here is a 175-residue protein sequence, read N- to C-terminus: Sialidase 85-1.3 (175 aa).

It belongs to the glycosyl hydrolase 33 family.

The enzyme catalyses Hydrolysis of alpha-(2-&gt;3)-, alpha-(2-&gt;6)-, alpha-(2-&gt;8)- glycosidic linkages of terminal sialic acid residues in oligosaccharides, glycoproteins, glycolipids, colominic acid and synthetic substrates.. Its function is as follows. Developmentally regulated neuraminidase implicated in parasite invasion of cells. May contribute to the pathology during T.cruzi infection by cleaving sialic acid from cells of the immune system. This chain is Sialidase 85-1.3 (SA85-1.3), found in Trypanosoma cruzi.